A 220-amino-acid polypeptide reads, in one-letter code: Deoxyribose-phosphate aldolase (220 aa).

Aspartate 89 acts as the Proton donor/acceptor in catalysis. The active-site Schiff-base intermediate with acetaldehyde is the lysine 151. Lysine 180 acts as the Proton donor/acceptor in catalysis.

It belongs to the DeoC/FbaB aldolase family. DeoC type 1 subfamily.

It localises to the cytoplasm. It carries out the reaction 2-deoxy-D-ribose 5-phosphate = D-glyceraldehyde 3-phosphate + acetaldehyde. The protein operates within carbohydrate degradation; 2-deoxy-D-ribose 1-phosphate degradation; D-glyceraldehyde 3-phosphate and acetaldehyde from 2-deoxy-alpha-D-ribose 1-phosphate: step 2/2. Its function is as follows. Catalyzes a reversible aldol reaction between acetaldehyde and D-glyceraldehyde 3-phosphate to generate 2-deoxy-D-ribose 5-phosphate. This Streptococcus pneumoniae serotype 2 (strain D39 / NCTC 7466) protein is Deoxyribose-phosphate aldolase.